The chain runs to 473 residues: Ornithine decarboxylase (473 aa).

Lys106 carries the N6-(pyridoxal phosphate)lysine modification. Residues Ser240, Gly277, and 313–316 contribute to the pyridoxal 5'-phosphate site; that span reads EPGR. 367–368 is a binding site for substrate; it reads FD. Residue Cys417 is the Proton donor; shared with dimeric partner of the active site. Position 418 (Asp418) interacts with substrate. Tyr447 is a binding site for pyridoxal 5'-phosphate.

This sequence belongs to the Orn/Lys/Arg decarboxylase class-II family. As to quaternary structure, homodimer. Only the dimer is catalytically active, as the active sites are constructed of residues from both monomers. The cofactor is pyridoxal 5'-phosphate.

The protein resides in the cytoplasm. It carries out the reaction L-ornithine + H(+) = putrescine + CO2. It participates in amine and polyamine biosynthesis; putrescine biosynthesis via L-ornithine pathway; putrescine from L-ornithine: step 1/1. Its activity is regulated as follows. Inhibited by antizyme (AZ) OAZ1 in response to polyamine levels. AZ inhibits the assembly of the functional homodimer by binding to ODC monomers and targeting them for ubiquitin-independent proteolytic destruction by the 26S proteasome. Catalyzes the first and rate-limiting step of polyamine biosynthesis that converts ornithine into putrescine, which is the precursor for the polyamines, spermidine and spermine. Polyamines are essential for cell proliferation and are implicated in cellular processes, ranging from DNA replication to apoptosis. This Candida albicans (strain SC5314 / ATCC MYA-2876) (Yeast) protein is Ornithine decarboxylase (SPE1).